The following is a 209-amino-acid chain: COP9 signalosome complex subunit 8 (209 aa).

One can recognise a PCI domain in the interval 8–179 (DNAFSFRKLL…GTLDVSLNRF (172 aa)). Position 175 is a phosphoserine (Ser-175).

This sequence belongs to the CSN8 family. Component of the CSN complex, composed of COPS1/GPS1, COPS2, COPS3, COPS4, COPS5, COPS6, COPS7 (COPS7A or COPS7B), COPS8 and COPS9. In the complex, it probably interacts directly with COPS3, COPS4 and COPS7 (COPS7A or COPS7B). Widely expressed.

It is found in the cytoplasm. It localises to the nucleus. In terms of biological role, component of the COP9 signalosome complex (CSN), a complex involved in various cellular and developmental processes. The CSN complex is an essential regulator of the ubiquitin (Ubl) conjugation pathway by mediating the deneddylation of the cullin subunits of SCF-type E3 ligase complexes, leading to decrease the Ubl ligase activity of SCF-type complexes such as SCF, CSA or DDB2. The complex is also involved in phosphorylation of p53/TP53, c-jun/JUN, IkappaBalpha/NFKBIA, ITPK1 and IRF8/ICSBP, possibly via its association with CK2 and PKD kinases. CSN-dependent phosphorylation of TP53 and JUN promotes and protects degradation by the Ubl system, respectively. This is COP9 signalosome complex subunit 8 (Cops8) from Mus musculus (Mouse).